The sequence spans 242 residues: Ubiquinone biosynthesis O-methyltransferase (242 aa).

S-adenosyl-L-methionine-binding residues include R44, G64, D85, and M129.

Belongs to the methyltransferase superfamily. UbiG/COQ3 family.

It catalyses the reaction a 3-demethylubiquinol + S-adenosyl-L-methionine = a ubiquinol + S-adenosyl-L-homocysteine + H(+). It carries out the reaction a 3-(all-trans-polyprenyl)benzene-1,2-diol + S-adenosyl-L-methionine = a 2-methoxy-6-(all-trans-polyprenyl)phenol + S-adenosyl-L-homocysteine + H(+). The protein operates within cofactor biosynthesis; ubiquinone biosynthesis. Functionally, O-methyltransferase that catalyzes the 2 O-methylation steps in the ubiquinone biosynthetic pathway. The polypeptide is Ubiquinone biosynthesis O-methyltransferase (Salmonella choleraesuis (strain SC-B67)).